A 272-amino-acid chain; its full sequence is Shikimate dehydrogenase (NADP(+)) (272 aa).

Residues 14 to 16 (SKS) and threonine 61 contribute to the shikimate site. The active-site Proton acceptor is the lysine 65. Residue glutamate 77 participates in NADP(+) binding. Shikimate-binding residues include asparagine 86 and aspartate 102. Residues 126–130 (GAGGA), 149–154 (NRTASR), and methionine 213 each bind NADP(+). A shikimate-binding site is contributed by tyrosine 215. Residue glycine 237 coordinates NADP(+).

This sequence belongs to the shikimate dehydrogenase family. In terms of assembly, homodimer.

It carries out the reaction shikimate + NADP(+) = 3-dehydroshikimate + NADPH + H(+). Its pathway is metabolic intermediate biosynthesis; chorismate biosynthesis; chorismate from D-erythrose 4-phosphate and phosphoenolpyruvate: step 4/7. Its function is as follows. Involved in the biosynthesis of the chorismate, which leads to the biosynthesis of aromatic amino acids. Catalyzes the reversible NADPH linked reduction of 3-dehydroshikimate (DHSA) to yield shikimate (SA). The chain is Shikimate dehydrogenase (NADP(+)) from Salmonella heidelberg (strain SL476).